The primary structure comprises 913 residues: Protein ECT2 (913 aa).

N-acetylalanine is present on A2. BRCT domains are found at residues 176–260 (MLNL…AAVD) and 266–354 (FKVP…MYLY). Phosphothreonine; by PKC/PRKCI is present on T359. Phosphoserine is present on residues S367 and S370. T373 is modified (phosphothreonine). Phosphoserine is present on S376. 2 consecutive short sequence motifs (nuclear localization signal) follow at residues 378-382 (RKRRR) and 401-405 (PRKRP). Disordered stretches follow at residues 389–415 (QLSR…SIGS) and 427–450 (IHYG…PPKQ). Residue T444 is modified to Phosphothreonine; by CDK1. One can recognise a DH domain in the interval 452-641 (ARWQVAKELY…KEVMTHINED (190 aa)). K611 participates in a covalent cross-link: Glycyl lysine isopeptide (Lys-Gly) (interchain with G-Cter in SUMO2). Residues 675–794 (RVETVSLGEH…KMLCRHVANT (120 aa)) form the PH domain. S716 and S842 each carry phosphoserine. The residue at position 846 (T846) is a Phosphothreonine; by CDK1. Positions 853 to 874 (MALSSSHSSEGRSPPSSGKLAV) are disordered. Residues 856–870 (SSSHSSEGRSPPSSG) show a composition bias toward low complexity. Phosphoserine occurs at positions 861 and 865.

As to quaternary structure, homodimer. Homooligomer. Found in the centralspindlin complex. Interacts with NR1I3. Interacts (Thr-359 phosphorylated form) with PARD6A; the interaction is observed in cancer cells. Interacts (Thr-359 phosphorylated form) with PRKCI; the interaction is observed in cancer cells. Interacts with PKP4; the interaction is observed at the midbody. Interacts with RACGAP1; the interaction is direct, occurs in a microtubule-dependent manner, occurs at anaphase and during cytokinesis, is inhibited in metaphase by phosphorylation of ECT2 on Thr-373 and is stimulated in early anaphase by dephosphorylation of ECT2 probably on Thr-373 through CDK1 activity. Interacts with PLK1; the interaction is stimulated upon its phosphorylation on Thr-444. Interacts with RHOA; the interaction results in allosteric activation of ECT2. Interacts with KIF23, PARD3, PARD6B and PRKCQ. Interacts with NEDD9/HEF1. Post-translationally, phosphorylated by PLK1 in vitro. Hyperphosphorylated during the G2 phase of the cell cycle. Phosphorylation at Thr-373 occurs during the G2/M phase, relieves its auto-inhibition status and stimulates its GEF activity. Phosphorylation at Thr-444 in G2/M phase is required for subsequent binding with PLK1 and Rho exchange activation. Dephosphorylated at the time of cytokinesis. Phosphorylation at Thr-359 is required for its transformation activity in cancer cells. In terms of tissue distribution, highest expression in testis. Also detectable in brain, kidney, liver and spleen.

The protein localises to the nucleus. It is found in the cytoplasm. Its subcellular location is the cytoskeleton. It localises to the spindle. The protein resides in the cleavage furrow. The protein localises to the midbody. It is found in the cell junction. Its subcellular location is the tight junction. Autoinhibited by the C-terminal PH domain which folds back and binds to the surface of the DH domain, blocking binding of RHOA to the catalytic center of the DH domain. The 2nd BRCT domain is also involved in inhibition, probably by helping to impede RHOA binding. Allosterically activated by binding of activated GTP-bound RHOA to the PH domain which stimulates the release of PH inhibition and promotes the binding of substrate RHOA to the catalytic center. Binding of phosphorylated RACGAP1 to the N-terminal BRCT domain-containing region also releases autoinhibition. Functionally, guanine nucleotide exchange factor (GEF) that catalyzes the exchange of GDP for GTP. Promotes guanine nucleotide exchange on the Rho family members of small GTPases, like RHOA, RHOC, RAC1 and CDC42. Required for signal transduction pathways involved in the regulation of cytokinesis. Component of the centralspindlin complex that serves as a microtubule-dependent and Rho-mediated signaling required for the myosin contractile ring formation during the cell cycle cytokinesis. Regulates the translocation of RHOA from the central spindle to the equatorial region. Plays a role in the control of mitotic spindle assembly; regulates the activation of CDC42 in metaphase for the process of spindle fibers attachment to kinetochores before chromosome congression. Involved in the regulation of epithelial cell polarity; participates in the formation of epithelial tight junctions in a polarity complex PARD3-PARD6-protein kinase PRKCQ-dependent manner. Plays a role in the regulation of neurite outgrowth. Inhibits phenobarbital (PB)-induced NR1I3 nuclear translocation. Stimulates the activity of RAC1 through its association with the oncogenic PARD6A-PRKCI complex in cancer cells, thereby acting to coordinately drive tumor cell proliferation and invasion. Also stimulates genotoxic stress-induced RHOB activity in breast cancer cells leading to their cell death. This chain is Protein ECT2 (Ect2), found in Mus musculus (Mouse).